The following is a 104-amino-acid chain: MIRKAFVMQVNADAHEEYQRRHNPIWPELEAVLKSHGAHHYAIYLDQERNLLFATVEIESEERWNAVASTDVCQRWWKHMRDVMPANPDNSPVSAELKEVFYLQ.

Tyr18 is a substrate binding site. His22 acts as the Proton donor in catalysis. Substrate is bound by residues Tyr41 and 76-77 (WW).

This sequence belongs to the rhamnose mutarotase family. As to quaternary structure, homodimer.

The protein resides in the cytoplasm. The enzyme catalyses alpha-L-rhamnose = beta-L-rhamnose. The protein operates within carbohydrate metabolism; L-rhamnose metabolism. In terms of biological role, involved in the anomeric conversion of L-rhamnose. This Salmonella agona (strain SL483) protein is L-rhamnose mutarotase.